Reading from the N-terminus, the 124-residue chain is Small ribosomal subunit protein uS13 (124 aa).

Positions Pro99 to Lys124 are disordered. Over residues Lys113 to Lys124 the composition is skewed to basic residues.

It belongs to the universal ribosomal protein uS13 family. Part of the 30S ribosomal subunit. Forms a loose heterodimer with protein S19. Forms two bridges to the 50S subunit in the 70S ribosome.

Located at the top of the head of the 30S subunit, it contacts several helices of the 16S rRNA. In the 70S ribosome it contacts the 23S rRNA (bridge B1a) and protein L5 of the 50S subunit (bridge B1b), connecting the 2 subunits; these bridges are implicated in subunit movement. Contacts the tRNAs in the A and P-sites. In Lachnospira eligens (strain ATCC 27750 / DSM 3376 / VPI C15-48 / C15-B4) (Eubacterium eligens), this protein is Small ribosomal subunit protein uS13.